The primary structure comprises 249 residues: tRNA (guanine-N(1)-)-methyltransferase (249 aa).

S-adenosyl-L-methionine is bound by residues G113 and 133-138; that span reads IGDYVL.

It belongs to the RNA methyltransferase TrmD family. In terms of assembly, homodimer.

It is found in the cytoplasm. The catalysed reaction is guanosine(37) in tRNA + S-adenosyl-L-methionine = N(1)-methylguanosine(37) in tRNA + S-adenosyl-L-homocysteine + H(+). Its function is as follows. Specifically methylates guanosine-37 in various tRNAs. The polypeptide is tRNA (guanine-N(1)-)-methyltransferase (Aeromonas salmonicida (strain A449)).